We begin with the raw amino-acid sequence, 62 residues long: DKPTTKPICEQAFGNSGPCFAYIKLYSYNQKTKKCEEFIYGGCQGNDNRFITLAECEQKCIK.

The BPTI/Kunitz inhibitor domain maps to 9–60 (CEQAFGNSGPCFAYIKLYSYNQKTKKCEEFIYGGCQGNDNRFITLAECEQKC). 3 disulfides stabilise this stretch: cysteine 9/cysteine 60, cysteine 19/cysteine 43, and cysteine 35/cysteine 56.

Its function is as follows. Inhibits chymotrypsin and thus avoids the accidental chymotrypsin-mediated activation of prophenoloxidase. This enzyme is required by the insect immune system to produce melanin which is used to engulf foreign objects. The protein is Chymotrypsin inhibitor SCI-I of Bombyx mori (Silk moth).